Consider the following 226-residue polypeptide: Charged multivesicular body protein 4 (226 aa).

The stretch at 22-88 (IQKLRETENM…DGTLSTIEMQ (67 aa)) forms a coiled coil. The tract at residues 169–226 (QENFDKEIIGIPEPTPTLPEAPTEDLPEKAKEKKKATTTTAVEDDDDPDMKQLLSWSN) is disordered.

The protein belongs to the SNF7 family. Homopolymer; forms elongated striated filaments of uniform ~10nm width. Monomers interact in a staggered arrangement mediated by complementary charged electrostatic surfaces. Interacts with l(2)gd1 (via DM14 domains 1 and 3); the interaction is direct and blocks access to the surface involved in homopolymerization. This interaction may be required for the ESCRT-III complex role in multivesicular body formation. As to expression, expressed at considerably higher levels in testis than in ovary. Expressed in midgut, eye, mouthparts and male accessory gland.

The protein localises to the endosome. Its subcellular location is the multivesicular body. It localises to the midbody. May be regulated by aurB/Aurora kinase B-dependent phosphorylation. Its function is as follows. Probable core polymerisation component of the endosomal sorting required for transport (ESCRT) III complex involved in multiple cellular processes requiring the outward bending of membranes, including vesicle budding, membrane repair and cytokinesis. The ESCRT pathway involves 4 complexes (ESCRT-0, -I, -II and -III) that sequentially assemble on the cytoplasmic side of membranes and induce membrane remodeling, budding and scission. As part of the ESCRT-III complex, involved in the budding of intraluminal vesicles (ILVs) into endosomes to form multivesicular bodies (MVBs), which target their contents for degradation via the endolysosomal pathway. Involved in regulation of signal transduction pathways, including the Notch and BMP/decapentaplegic (dpp) pathways, by sequestering the intracellular domains of activated receptors into ILVs, isolating them from the cytoplasm and targeting them for lysosomal degradation. Involved in targeting ubiquitilated proteins, such as mono-ubiquitilanated N/Notch, to MVBs for degradation. Plays a role in wing development by regulating Notch signaling. Involved in abscission of germline cells during oogenesis. Involved in spermiogenesis. Required for efficient cytoplasmic isolation and abscission during cytokinesis of epithelial sensory organ precursor cells. May be involved in septate junction remodeling and maintenance. The protein is Charged multivesicular body protein 4 of Drosophila melanogaster (Fruit fly).